We begin with the raw amino-acid sequence, 311 residues long: 3'(2'),5'-bisphosphate nucleotidase 1 (311 aa).

The active-site Proton acceptor is the Asp49. 4 residues coordinate Mg(2+): Glu72, Asp116, Leu118, and Asp119. Thr121 serves as the catalytic Proton acceptor. AMP contacts are provided by Thr202, His205, Gly227, and Lys231. Asp254 is a Mg(2+) binding site.

This sequence belongs to the inositol monophosphatase superfamily. Requires Mg(2+) as cofactor.

The enzyme catalyses adenosine 3',5'-bisphosphate + H2O = AMP + phosphate. It carries out the reaction adenosine 2',5'-bisphosphate + H2O = AMP + phosphate. It catalyses the reaction 3'-phosphoadenylyl sulfate + H2O = adenosine 5'-phosphosulfate + phosphate. The catalysed reaction is 1D-myo-inositol 1,4-bisphosphate + H2O = 1D-myo-inositol 4-phosphate + phosphate. The enzyme catalyses 1D-myo-inositol 1,3,4-trisphosphate + H2O = 1D-myo-inositol 3,4-bisphosphate + phosphate. Its activity is regulated as follows. Inhibited by Li(+) and Ca(2+), but not by Na(+). Functionally, phosphatase that converts 3'(2')-phosphoadenosine 5'-phosphate (PAP) to AMP and adenosine 3'-phosphate 5'-phosphosulfate (PAPS) to adenosine 5'-phosphosulfate (APS). Is also able to hydrolyze inositol 1,4-bisphosphate (Ins(1,4)P2) and inositol 1,3,4-trisphosphate (Ins(1,3,4)P3), but is not active on AMP, 3'-AMP, fructose-1,6-bisphosphate, Ins(1)P, Ins(2)P and Ins(1,4,5)P3. Probably prevents the toxic accumulation of PAP, a compound which inhibits a variety of proteins, including PAPS-utilizing enzymes such as sulfotransferases, and RNA processing enzymes. Could also play a role in inositol recycling and phosphoinositide metabolism. This Dictyostelium discoideum (Social amoeba) protein is 3'(2'),5'-bisphosphate nucleotidase 1 (bpnt1).